The chain runs to 177 residues: Putative acetyltransferase FG08082 (177 aa).

One can recognise an N-acetyltransferase domain in the interval 81–174 (EEWEQVGLVR…VSIAMVEGPG (94 aa)).

It belongs to the acetyltransferase family.

It participates in mycotoxin biosynthesis. Functionally, putative acetyltransferase; part of the gene cluster that mediates the biosynthesis of butenolide, a mycotoxin that shows antibiotic activity but does not seem to play a major role in the spread of head blight in wheat. Butenolide is derived from glutamic acid via a 4-acetamido-2-butenoic acid intermediate. The predicted function of the NADH:flavin oxidoreductase FG08077, the cytochrome P450 monooxygenase FG08079, the decarboxylase FG08083, and the putative acetyltransferase FG08082 are consistent with this pathway, however, the respective activities of the butelonide biosynthesis cluster enzymes have still to be experimentally determined. The polypeptide is Putative acetyltransferase FG08082 (Gibberella zeae (strain ATCC MYA-4620 / CBS 123657 / FGSC 9075 / NRRL 31084 / PH-1) (Wheat head blight fungus)).